We begin with the raw amino-acid sequence, 239 residues long: Ribosomal RNA small subunit methyltransferase G (239 aa).

S-adenosyl-L-methionine contacts are provided by residues G78, F83, A129–E130, and R148.

This sequence belongs to the methyltransferase superfamily. RNA methyltransferase RsmG family.

Its subcellular location is the cytoplasm. Its function is as follows. Specifically methylates the N7 position of a guanine in 16S rRNA. The polypeptide is Ribosomal RNA small subunit methyltransferase G (Clostridium botulinum (strain Loch Maree / Type A3)).